Reading from the N-terminus, the 182-residue chain is MSIEEEDTNKITCTQDFLHQYFVTERVSIQFGLNNKTVKRINKDEFDKAVNCIMSWTNYPKPGLKRTASTYLLSNSFKKSATVSLPFILGDPVCMPKRVESNNNDTCLLYSDTLYDDPLIQRNDQAGDEIEDEFSFTLLRSEVNEIRPISSSSTAQILQSDYSALMYERQASNGSIFQFSSP.

Interacts with REC114 and SPO11.

Functionally, potential transcriptional regulator that is required to activate expression of a number of early meiotic genes including HOP1. The protein is Meiotic recombination protein REC104 (REC104) of Saccharomyces cerevisiae (strain ATCC 204508 / S288c) (Baker's yeast).